Reading from the N-terminus, the 369-residue chain is Immunoglobulin superfamily member 5 (369 aa).

A signal peptide spans Met1–Ser24. Ig-like V-type domains are found at residues Tyr25–Gln125 and Gly128–Asn217. The Extracellular segment spans residues Tyr25 to Ala239. Asn33 and Asn45 each carry an N-linked (GlcNAc...) asparagine glycan. The cysteines at positions 46 and 109 are disulfide-linked. 3 N-linked (GlcNAc...) asparagine glycosylation sites follow: Asn146, Asn196, and Asn217. Cys149 and Cys201 are oxidised to a cystine. The helical transmembrane segment at Ile240–Ile260 threads the bilayer. The Cytoplasmic portion of the chain corresponds to Phe261–Val369. The tract at residues Pro321–Ser354 is disordered.

It belongs to the immunoglobulin superfamily. Interacts with MAGI1 at tight junctions, forms a tripartite complex with NPHS1. Interacts with LNX1 isoform 2 via its PDZ 2 domain, it may also interact with other isoforms containing this domain. In terms of tissue distribution, in kidney, it is found in glomeruli and in the proximal tubules (at protein level).

Its subcellular location is the apical cell membrane. It is found in the cell junction. The protein localises to the tight junction. Functionally, provides, together with MAGI1, an adhesion machinery at tight junctions, which may regulate the permeability of kidney glomerulus and small intestinal epithelial cells. Mediates calcium-independent homophilic cell adhesion. In testis, it may function as a cell adhesion molecule rather than a tight-junction protein. It may participate in the adhesion between spermatogonia-spermatogonia, spermatogonia-Sertoli cells, and Sertoli cells-Sertoli cells. The protein is Immunoglobulin superfamily member 5 (Igsf5) of Rattus norvegicus (Rat).